The primary structure comprises 457 residues: MKKTMFDKIWHQHVITGEPGEPQLIYVDLQLLHEVTSPQAFEGLREKNRQVRRPDRNFATMDHNVPTVDIFNIKDLISKKQIETLAKNTKDFGIRLAGMGSKDQGIVHVIGPQLGLTQPGMVIVCGDSHTATHGAFGSIAFGIGTSEVEHVLATQTIWQTKPKTIGIHVHGKLSIGVYAKDIIMGIIAREGVSFGTGYAVEFYGDTIRNMNMEERMTLCNMVIEGGAKMGSIQPDQTTFDYIADRKYAPGNMEKAVSYWKQFYTDSPDAFDKVIDFSVNELAPFVSWGTNPGMAVPIDQPFPKIKNEEDKKAYEYVGLKAGEKANQIPIKFVFFGSCTNGRLSDLIIAAKVLKNKHIKNGITALVVPGSRKIKEKAEKIGLDKIFKEAGCEWREPGCSACLGMNPDRVPAGIHCASTSNRNFAGRQGAGSRTHLASPAMVAAAAIHGRFIDIRKEII.

[4Fe-4S] cluster is bound by residues cysteine 337, cysteine 397, and cysteine 400.

Belongs to the aconitase/IPM isomerase family. LeuC type 1 subfamily. In terms of assembly, heterodimer of LeuC and LeuD. [4Fe-4S] cluster is required as a cofactor.

It carries out the reaction (2R,3S)-3-isopropylmalate = (2S)-2-isopropylmalate. The protein operates within amino-acid biosynthesis; L-leucine biosynthesis; L-leucine from 3-methyl-2-oxobutanoate: step 2/4. Catalyzes the isomerization between 2-isopropylmalate and 3-isopropylmalate, via the formation of 2-isopropylmaleate. The protein is 3-isopropylmalate dehydratase large subunit of Oenococcus oeni (strain ATCC BAA-331 / PSU-1).